A 530-amino-acid chain; its full sequence is Vesicular acetylcholine transporter (530 aa).

Over 1–33 (MEPTAPTGQARAAATKLSEAVGAALQEPQRQRR) the chain is Cytoplasmic. A helical membrane pass occupies residues 34–54 (LVLVIVCVALLLDNMLYMVIV). Over 55–125 (PIVPDYIAHM…PTESEDVKIG (71 aa)) the chain is Lumenal, vesicle. Residues Asn89 and Asn96 are each glycosylated (N-linked (GlcNAc...) asparagine). Residues 126–146 (VLFASKAILQLLVNPLSGPFI) traverse the membrane as a helical segment. The Cytoplasmic portion of the chain corresponds to 147 to 152 (DRMSYD). Residues 153–173 (VPLLIGLGVMFASTVMFAFAE) traverse the membrane as a helical segment. The Lumenal, vesicle segment spans residues 174-182 (DYATFFAAR). A helical membrane pass occupies residues 183-203 (SLQGLGSAFADTSGIAMIADK). At 204 to 213 (YPEEPERSRA) the chain is on the cytoplasmic side. The helical transmembrane segment at 214–234 (LGVALAFISFGSLVAPPFGGI) threads the bilayer. Topologically, residues 235 to 242 (LYEFAGKR) are lumenal, vesicle. The helical transmembrane segment at 243–263 (VPFLVLAAVSLFDALLLLAVA) threads the bilayer. At 264–288 (KPFSAAARARANLPVGTPIHRLMLD) the chain is on the cytoplasmic side. The chain crosses the membrane as a helical span at residues 289-309 (PYIAVVAGALTTCNIPLAFLE). The Lumenal, vesicle segment spans residues 310–325 (PTIATWMKHTMAASEW). Residues 326–346 (EMGMVWLPAFVPHVLGVYLTV) form a helical membrane-spanning segment. Topologically, residues 347–356 (RLAARYPHLQ) are cytoplasmic. The chain crosses the membrane as a helical span at residues 357–377 (WLYGALGLAVIGVSSCVVPAC). The Lumenal, vesicle portion of the chain corresponds to 378–388 (RSFAPLVVSLC). A helical transmembrane segment spans residues 389–409 (GLCFGIALVDTALLPTLAFLV). Residues 410–422 (DVRHVSVYGSVYA) lie on the Cytoplasmic side of the membrane. The chain crosses the membrane as a helical span at residues 423 to 443 (IADISYSVAYALGPIVAGHIV). Topologically, residues 444-447 (HSLG) are lumenal, vesicle. A helical membrane pass occupies residues 448 to 468 (FEQLSLGMGLANLLYAPVLLL). The Cytoplasmic segment spans residues 469–530 (LRNVGLLTRS…EDDYNYYSRS (62 aa)). The interval 471–530 (NVGLLTRSRSERDVLLDEPPQGLYDAVRLREVQGKDGGEPCSPPGPFDGCEDDYNYYSRS) is mediates interaction with SEC14L1. The segment at 504–530 (GKDGGEPCSPPGPFDGCEDDYNYYSRS) is disordered.

It belongs to the major facilitator superfamily. Vesicular transporter family. Interacts with SEC14L1. As to expression, expressed in the spinal cord, brain (excluding the cerebellum), brain stem and cholinergic tissues. Not expressed in peripheral tissues such as liver and kidney.

Its subcellular location is the cytoplasmic vesicle. It localises to the secretory vesicle. The protein resides in the synaptic vesicle membrane. The catalysed reaction is acetylcholine(out) + 2 H(+)(in) = acetylcholine(in) + 2 H(+)(out). The enzyme catalyses choline(in) + 2 H(+)(out) = choline(out) + 2 H(+)(in). It catalyses the reaction serotonin(in) + 2 H(+)(out) = serotonin(out) + 2 H(+)(in). Electrogenic antiporter that exchanges one cholinergic neurotransmitter, acetylcholine or choline, with two intravesicular protons across the membrane of synaptic vesicles. Uses the electrochemical proton gradient established by the V-type proton-pump ATPase to store neurotransmitters inside the vesicles prior to their release via exocytosis. Determines cholinergic vesicular quantal size at presynaptic nerve terminals in developing neuro-muscular junctions with an impact on motor neuron differentiation and innervation pattern. Part of forebrain cholinergic system, regulates hippocampal synapse transmissions that underlie spatial memory formation. Can transport serotonin. The polypeptide is Vesicular acetylcholine transporter (Slc18a3) (Mus musculus (Mouse)).